We begin with the raw amino-acid sequence, 332 residues long: 3-dehydroquinate synthase (332 aa).

Residues 55–60 (DGEEYK), 89–93 (GVITD), 113–114 (TT), Lys126, Lys134, and 152–155 (TLST) contribute to the NAD(+) site. Residues Glu167, His226, and His242 each contribute to the Zn(2+) site.

The protein belongs to the sugar phosphate cyclases superfamily. Dehydroquinate synthase family. Requires NAD(+) as cofactor. It depends on Co(2+) as a cofactor. Zn(2+) serves as cofactor.

It localises to the cytoplasm. The enzyme catalyses 7-phospho-2-dehydro-3-deoxy-D-arabino-heptonate = 3-dehydroquinate + phosphate. It functions in the pathway metabolic intermediate biosynthesis; chorismate biosynthesis; chorismate from D-erythrose 4-phosphate and phosphoenolpyruvate: step 2/7. Catalyzes the conversion of 3-deoxy-D-arabino-heptulosonate 7-phosphate (DAHP) to dehydroquinate (DHQ). This is 3-dehydroquinate synthase from Pyrococcus abyssi (strain GE5 / Orsay).